Consider the following 448-residue polypeptide: Tryptamine benzoyltransferase 2 (448 aa).

A disordered region spans residues 1-20 (MEITSSAMLKPAPTPTPHPL). Active-site proton acceptor residues include H155 and D386.

Belongs to the plant acyltransferase family.

Hydroxycinnamoyl transferase that catalyzes the transfer of an acyl from benzoyl-CoA to tryptamine, to produce benzoyl tryptamine. Serotonin and tyramine serve as acyl acceptors in vitro. Specific for benzoyl-CoA as acyl donor. Has no activity with p-coumaroyl-CoA, caffeoyl-CoA, or feruloyl-CoA as acyl donors. This chain is Tryptamine benzoyltransferase 2, found in Oryza sativa subsp. japonica (Rice).